We begin with the raw amino-acid sequence, 556 residues long: Formate--tetrahydrofolate ligase (556 aa).

65–72 (TPAGEGKS) is an ATP binding site.

This sequence belongs to the formate--tetrahydrofolate ligase family.

The catalysed reaction is (6S)-5,6,7,8-tetrahydrofolate + formate + ATP = (6R)-10-formyltetrahydrofolate + ADP + phosphate. It functions in the pathway one-carbon metabolism; tetrahydrofolate interconversion. This is Formate--tetrahydrofolate ligase from Streptococcus equi subsp. zooepidemicus (strain MGCS10565).